We begin with the raw amino-acid sequence, 182 residues long: Protein transport protein gos1 (182 aa).

Over 1–163 the chain is Cytoplasmic; sequence MKSMLLRDSV…RKTSIRRRRD (163 aa). The helical; Anchor for type IV membrane protein transmembrane segment at 164–181 threads the bilayer; the sequence is SIILALLISVLMLLFLFF. Residue H182 is a topological domain, vesicular.

It belongs to the GOSR1 family. Component of a SNARE complex consisting of sed5, gos1, ykt6, and sft1.

It localises to the golgi apparatus membrane. Functionally, nonessential SNARE involved in retrograde transport within the Golgi complex. In Schizosaccharomyces pombe (strain 972 / ATCC 24843) (Fission yeast), this protein is Protein transport protein gos1 (gos1).